Here is a 539-residue protein sequence, read N- to C-terminus: T-complex protein 1 subunit zeta (539 aa).

Belongs to the TCP-1 chaperonin family. As to quaternary structure, heterooligomeric complex of about 850 to 900 kDa that forms two stacked rings, 12 to 16 nm in diameter.

The protein localises to the cytoplasm. Molecular chaperone; assists the folding of proteins upon ATP hydrolysis. Known to play a role, in vitro, in the folding of actin and tubulin. The protein is T-complex protein 1 subunit zeta (cct6) of Dictyostelium discoideum (Social amoeba).